The sequence spans 256 residues: MLCIADKTFDSHLFTGTGKFASPQLMVSAIRESGSQLVTLAMKRVDLRNHNDAILAPLLEAGVTLLPNTSGAKTAEEAIFAAHLAREALGTSWLKLEIHPDARWLMPDPIETLKAAELLVKQGFTVLPYCGADPVLCKRLEEVGCAAVMPLGAPIGSNQGLETRAMLEIIIEQATIPVVVDAGIGVPSHAAQALEMGADAVLVNTAIAVADDPVMMARAFRLAVEAGALARQSGPGSRRAQAQASSPLTGFLEAYS.

The Schiff-base intermediate with DXP role is filled by lysine 95. 1-deoxy-D-xylulose 5-phosphate contacts are provided by residues glycine 156, 182 to 183 (AG), and 204 to 205 (NT).

The protein belongs to the ThiG family. Homotetramer. Forms heterodimers with either ThiH or ThiS.

It localises to the cytoplasm. It catalyses the reaction [ThiS sulfur-carrier protein]-C-terminal-Gly-aminoethanethioate + 2-iminoacetate + 1-deoxy-D-xylulose 5-phosphate = [ThiS sulfur-carrier protein]-C-terminal Gly-Gly + 2-[(2R,5Z)-2-carboxy-4-methylthiazol-5(2H)-ylidene]ethyl phosphate + 2 H2O + H(+). The protein operates within cofactor biosynthesis; thiamine diphosphate biosynthesis. Its function is as follows. Catalyzes the rearrangement of 1-deoxy-D-xylulose 5-phosphate (DXP) to produce the thiazole phosphate moiety of thiamine. Sulfur is provided by the thiocarboxylate moiety of the carrier protein ThiS. In vitro, sulfur can be provided by H(2)S. The protein is Thiazole synthase of Enterobacter sp. (strain 638).